Consider the following 398-residue polypeptide: Bifunctional enzyme IspD/IspF (398 aa).

Residues Met1–Ile234 form a 2-C-methyl-D-erythritol 4-phosphate cytidylyltransferase region. Residues Arg235–Asp398 form a 2-C-methyl-D-erythritol 2,4-cyclodiphosphate synthase region. A divalent metal cation-binding residues include Asp241 and His243. Residues Asp241–His243 and His267–Ser268 each bind 4-CDP-2-C-methyl-D-erythritol 2-phosphate. His275 is an a divalent metal cation binding site. 4-CDP-2-C-methyl-D-erythritol 2-phosphate contacts are provided by residues Asp289–Gly291, Thr365–Glu368, Phe372, and Arg375.

It in the N-terminal section; belongs to the IspD/TarI cytidylyltransferase family. IspD subfamily. This sequence in the C-terminal section; belongs to the IspF family. It depends on a divalent metal cation as a cofactor.

It carries out the reaction 2-C-methyl-D-erythritol 4-phosphate + CTP + H(+) = 4-CDP-2-C-methyl-D-erythritol + diphosphate. The catalysed reaction is 4-CDP-2-C-methyl-D-erythritol 2-phosphate = 2-C-methyl-D-erythritol 2,4-cyclic diphosphate + CMP. Its pathway is isoprenoid biosynthesis; isopentenyl diphosphate biosynthesis via DXP pathway; isopentenyl diphosphate from 1-deoxy-D-xylulose 5-phosphate: step 2/6. It functions in the pathway isoprenoid biosynthesis; isopentenyl diphosphate biosynthesis via DXP pathway; isopentenyl diphosphate from 1-deoxy-D-xylulose 5-phosphate: step 4/6. Functionally, bifunctional enzyme that catalyzes the formation of 4-diphosphocytidyl-2-C-methyl-D-erythritol from CTP and 2-C-methyl-D-erythritol 4-phosphate (MEP) (IspD), and catalyzes the conversion of 4-diphosphocytidyl-2-C-methyl-D-erythritol 2-phosphate (CDP-ME2P) to 2-C-methyl-D-erythritol 2,4-cyclodiphosphate (ME-CPP) with a corresponding release of cytidine 5-monophosphate (CMP) (IspF). This Rhodopseudomonas palustris (strain BisB18) protein is Bifunctional enzyme IspD/IspF.